Consider the following 482-residue polypeptide: tRNA sulfurtransferase (482 aa).

The region spanning 61–165 (LAIRDALTRI…DDRLLLIKGR (105 aa)) is the THUMP domain. ATP-binding positions include 183 to 184 (LI), K265, G287, and Q296. An intrachain disulfide couples C344 to C456. Positions 404 to 482 (FGANDVILDI…GFANVKVYRP (79 aa)) constitute a Rhodanese domain. Catalysis depends on C456, which acts as the Cysteine persulfide intermediate.

This sequence belongs to the ThiI family.

The protein resides in the cytoplasm. It catalyses the reaction [ThiI sulfur-carrier protein]-S-sulfanyl-L-cysteine + a uridine in tRNA + 2 reduced [2Fe-2S]-[ferredoxin] + ATP + H(+) = [ThiI sulfur-carrier protein]-L-cysteine + a 4-thiouridine in tRNA + 2 oxidized [2Fe-2S]-[ferredoxin] + AMP + diphosphate. The enzyme catalyses [ThiS sulfur-carrier protein]-C-terminal Gly-Gly-AMP + S-sulfanyl-L-cysteinyl-[cysteine desulfurase] + AH2 = [ThiS sulfur-carrier protein]-C-terminal-Gly-aminoethanethioate + L-cysteinyl-[cysteine desulfurase] + A + AMP + 2 H(+). Its pathway is cofactor biosynthesis; thiamine diphosphate biosynthesis. Functionally, catalyzes the ATP-dependent transfer of a sulfur to tRNA to produce 4-thiouridine in position 8 of tRNAs, which functions as a near-UV photosensor. Also catalyzes the transfer of sulfur to the sulfur carrier protein ThiS, forming ThiS-thiocarboxylate. This is a step in the synthesis of thiazole, in the thiamine biosynthesis pathway. The sulfur is donated as persulfide by IscS. In Salmonella arizonae (strain ATCC BAA-731 / CDC346-86 / RSK2980), this protein is tRNA sulfurtransferase.